The sequence spans 487 residues: Probable Xaa-Pro aminopeptidase CPSG_02684 (487 aa).

Residues 1–10 (MAGSNTLSSS) are compositionally biased toward polar residues. The disordered stretch occupies residues 1–22 (MAGSNTLSSSEHGDDPRGHSYS). The Mn(2+) site is built by D275, D286, E421, and E460.

Belongs to the peptidase M24B family. It depends on Mn(2+) as a cofactor.

The catalysed reaction is Release of any N-terminal amino acid, including proline, that is linked to proline, even from a dipeptide or tripeptide.. In terms of biological role, catalyzes the removal of a penultimate prolyl residue from the N-termini of peptides. This chain is Probable Xaa-Pro aminopeptidase CPSG_02684, found in Coccidioides posadasii (strain RMSCC 757 / Silveira) (Valley fever fungus).